The following is a 226-amino-acid chain: Urease accessory protein UreF (226 aa).

Belongs to the UreF family. In terms of assembly, ureD, UreF and UreG form a complex that acts as a GTP-hydrolysis-dependent molecular chaperone, activating the urease apoprotein by helping to assemble the nickel containing metallocenter of UreC. The UreE protein probably delivers the nickel.

It is found in the cytoplasm. Its function is as follows. Required for maturation of urease via the functional incorporation of the urease nickel metallocenter. The sequence is that of Urease accessory protein UreF from Paraburkholderia xenovorans (strain LB400).